A 428-amino-acid polypeptide reads, in one-letter code: Protein terminus (428 aa).

The C3H1-type zinc finger occupies 325–346; sequence CRRCRTQFSRRSKLHIHQKLRC.

This is Protein terminus (term) from Drosophila melanogaster (Fruit fly).